Consider the following 283-residue polypeptide: MTESKSEGTAVAAPTPEEVRQMYDDFTDPFARIWGENLHFGYWEDAGADVSVDDATDRLTDEMIALLDVRSGDRVLDVGCGIGKPAVRLATARDVRVTGISISRPQVNQANARATAAGLANRVTFSYADAMDLPFEDASFDAVWALESLHHMPDRGRALREMARVLRPGGTVAIADFVLLAPVEGAKKEAVDAFRAGGGVLSLGGIDEYESDVRQAELVVTSTVDISAQARPSLVKTAEAFENARSQVEPFMGAEGLDRMIATFRGLAEVPEAGYVLIGARKP.

S-adenosyl-L-methionine-binding positions include S101, Q106, 129 to 130 (DA), L146, and H151.

Belongs to the methyltransferase superfamily. As to quaternary structure, monomer.

The enzyme catalyses 4'-demethylrebeccamycin + S-adenosyl-L-methionine = rebeccamycin + S-adenosyl-L-homocysteine + H(+). In terms of biological role, glycosyl O-methyltransferase that catalyzes the final step in the biosynthesis of rebeccamycin, an indolocarbazole alkaloid that inhibits topoisomerase 1. Has broad substrate specificity and functions as glycosyl O-methyltransferase on a number of rebeccamycin analogs. In Lentzea aerocolonigenes (Lechevalieria aerocolonigenes), this protein is Demethylrebeccamycin-D-glucose O-methyltransferase (rebM).